Reading from the N-terminus, the 212-residue chain is uncharacterized protein (212 aa).

The disordered stretch occupies residues 97–151 (SDASEAKNDDRRSDGRFALYSVSDTPETTTASRSADRSTNPKTAKHPKSAAKPTV). Residues 100-111 (SEAKNDDRRSDG) are compositionally biased toward basic and acidic residues.

This is an uncharacterized protein from Mycobacterium tuberculosis (strain CDC 1551 / Oshkosh).